The sequence spans 280 residues: Diaminopimelate epimerase (280 aa).

Substrate contacts are provided by Asn-11 and Asn-64. The active-site Proton donor is Cys-73. Substrate contacts are provided by residues 74–75 (GN), Asn-162, Asn-195, and 213–214 (ER). Residue Cys-222 is the Proton acceptor of the active site. Residue 223-224 (GT) coordinates substrate.

Belongs to the diaminopimelate epimerase family. Homodimer.

The protein localises to the cytoplasm. The enzyme catalyses (2S,6S)-2,6-diaminopimelate = meso-2,6-diaminopimelate. It participates in amino-acid biosynthesis; L-lysine biosynthesis via DAP pathway; DL-2,6-diaminopimelate from LL-2,6-diaminopimelate: step 1/1. Its function is as follows. Catalyzes the stereoinversion of LL-2,6-diaminopimelate (L,L-DAP) to meso-diaminopimelate (meso-DAP), a precursor of L-lysine and an essential component of the bacterial peptidoglycan. In Pelotomaculum thermopropionicum (strain DSM 13744 / JCM 10971 / SI), this protein is Diaminopimelate epimerase.